The chain runs to 46 residues: Esculentin-1a/b (46 aa).

Cysteines 40 and 46 form a disulfide.

It belongs to the frog skin active peptide (FSAP) family. Esculentin subfamily. Expressed by the skin glands.

It localises to the secreted. In terms of biological role, antimicrobial peptide. Stimulates insulin secretion by BRIN-BD11 cells in vitro. Shows hemolytic activity. The protein is Esculentin-1a/b of Pelophylax ridibundus (Marsh frog).